We begin with the raw amino-acid sequence, 147 residues long: Large ribosomal subunit protein uL13 (147 aa).

The protein belongs to the universal ribosomal protein uL13 family. Part of the 50S ribosomal subunit.

Its function is as follows. This protein is one of the early assembly proteins of the 50S ribosomal subunit, although it is not seen to bind rRNA by itself. It is important during the early stages of 50S assembly. The protein is Large ribosomal subunit protein uL13 of Arthrobacter sp. (strain FB24).